Here is a 580-residue protein sequence, read N- to C-terminus: 2-succinyl-5-enolpyruvyl-6-hydroxy-3-cyclohexene-1-carboxylate synthase (580 aa).

Belongs to the TPP enzyme family. MenD subfamily. In terms of assembly, homodimer. Mg(2+) serves as cofactor. Requires Mn(2+) as cofactor. It depends on thiamine diphosphate as a cofactor.

It carries out the reaction isochorismate + 2-oxoglutarate + H(+) = 5-enolpyruvoyl-6-hydroxy-2-succinyl-cyclohex-3-ene-1-carboxylate + CO2. The protein operates within quinol/quinone metabolism; 1,4-dihydroxy-2-naphthoate biosynthesis; 1,4-dihydroxy-2-naphthoate from chorismate: step 2/7. It participates in quinol/quinone metabolism; menaquinone biosynthesis. Catalyzes the thiamine diphosphate-dependent decarboxylation of 2-oxoglutarate and the subsequent addition of the resulting succinic semialdehyde-thiamine pyrophosphate anion to isochorismate to yield 2-succinyl-5-enolpyruvyl-6-hydroxy-3-cyclohexene-1-carboxylate (SEPHCHC). The polypeptide is 2-succinyl-5-enolpyruvyl-6-hydroxy-3-cyclohexene-1-carboxylate synthase (Listeria monocytogenes serovar 1/2a (strain ATCC BAA-679 / EGD-e)).